Reading from the N-terminus, the 816-residue chain is Leucine--tRNA ligase (816 aa).

The 'HIGH' region signature appears at 40–51; the sequence is SYPSGSQLHAGH. Positions 576-580 match the 'KMSKS' region motif; it reads KMSKS. An ATP-binding site is contributed by K579.

The protein belongs to the class-I aminoacyl-tRNA synthetase family.

It localises to the cytoplasm. It carries out the reaction tRNA(Leu) + L-leucine + ATP = L-leucyl-tRNA(Leu) + AMP + diphosphate. The chain is Leucine--tRNA ligase from Clostridium perfringens (strain ATCC 13124 / DSM 756 / JCM 1290 / NCIMB 6125 / NCTC 8237 / Type A).